A 230-amino-acid polypeptide reads, in one-letter code: Exosome complex component Rrp4 (230 aa).

Positions 60–129 constitute an S1 motif domain; it reads NDKVIGKVID…EIKESWLSLK (70 aa). A KH domain is found at 137 to 195; sequence EEGSIIYIKAPKVPRVIGKAGNMINMIKSETNTKIIVGQNGLIWIDGEPENVDLAINAI.

It belongs to the RRP4 family. As to quaternary structure, component of the archaeal exosome complex. Forms a trimer of Rrp4 and/or Csl4 subunits. The trimer associates with a hexameric ring-like arrangement composed of 3 Rrp41-Rrp42 heterodimers.

The protein localises to the cytoplasm. In terms of biological role, non-catalytic component of the exosome, which is a complex involved in RNA degradation. Increases the RNA binding and the efficiency of RNA degradation. Confers strong poly(A) specificity to the exosome. The protein is Exosome complex component Rrp4 of Picrophilus torridus (strain ATCC 700027 / DSM 9790 / JCM 10055 / NBRC 100828 / KAW 2/3).